A 120-amino-acid chain; its full sequence is Nitrogen regulatory protein GlnK3 (120 aa).

ADP is bound by residues Thr-40 and Gly-48–Gln-50. Residues Thr-40 and Gly-48–Gln-50 contribute to the ATP site. 2-oxoglutarate contacts are provided by residues Gly-48–Gly-52 and Lys-69. Residues Val-75 and Gly-98–Arg-101 contribute to the ADP site. Residues Val-75 and Gly-98–Arg-101 each bind ATP. Gly-98 contacts 2-oxoglutarate.

Belongs to the P(II) protein family. As to quaternary structure, homotrimer. Interacts and forms a complex with Amt3.

Its subcellular location is the cytoplasm. Its activity is regulated as follows. Activity is influenced by intracellular pools of the effector molecules ATP, ADP and 2-oxoglutarate. It senses the cellular nitrogen status through 2-oxoglutarate, and the energy level of the cell by binding both ATP and ADP with different affinities. ATP and 2-oxoglutarate prohibit binding to Amt3. ADP promotes the complex formation. In terms of biological role, involved in the regulation of nitrogen metabolism. Regulates the activity of its targets by protein-protein interaction in response to the nitrogen status of the cell. Regulates the activity of the ammonia channel Amt3 via direct interaction. This chain is Nitrogen regulatory protein GlnK3, found in Archaeoglobus fulgidus (strain ATCC 49558 / DSM 4304 / JCM 9628 / NBRC 100126 / VC-16).